Here is a 555-residue protein sequence, read N- to C-terminus: uncharacterized protein (555 aa).

5 helical membrane passes run 13 to 30 (ALQA…GLGL), 35 to 57 (FWGV…HFGL), 72 to 91 (LVIF…FSSF), 98 to 120 (LNML…SYAT), and 157 to 179 (TPAL…AVLL). 2 RCK C-terminal domains span residues 188–273 (EDLE…LFGE) and 282–366 (KEDI…VLGN). The next 6 helical transmembrane spans lie at 376 to 398 (LVVI…SIPG), 408 to 430 (AGGP…MITY), 437 to 459 (LMLR…GAHF), 469 to 491 (LLWI…FVAF), 498 to 517 (FGSV…ALNY), and 532 to 554 (ATVY…MFLL).

It belongs to the AAE transporter (TC 2.A.81) family.

It localises to the cell membrane. This is an uncharacterized protein from Bacteroides thetaiotaomicron (strain ATCC 29148 / DSM 2079 / JCM 5827 / CCUG 10774 / NCTC 10582 / VPI-5482 / E50).